The following is a 55-amino-acid chain: Large ribosomal subunit protein bL33 (55 aa).

The protein belongs to the bacterial ribosomal protein bL33 family.

This Nitrobacter hamburgensis (strain DSM 10229 / NCIMB 13809 / X14) protein is Large ribosomal subunit protein bL33 (rpmG).